A 351-amino-acid chain; its full sequence is Cytochrome c biogenesis protein CcsA (351 aa).

The next 8 membrane-spanning stretches (helical) occupy residues 17 to 37 (VLFLTMLLYWIGAAFPGLPAI), 38 to 58 (NALGTAGMAIANLSIATLLGA), 68 to 88 (LSNLYESLFFLSWGITTVHLI), 97 to 117 (LVGVFTTPVAMGIVAFATLTL), 143 to 163 (MMLSYSALMVGSLLAIAFLVI), 259 to 279 (IIGLGFPLLTIGIIAGAVWAN), 286 to 306 (WSWDPKETWALITWLVFAAYL), and 320 to 340 (AILAASGFVVVWICYLGVNLL).

This sequence belongs to the CcmF/CycK/Ccl1/NrfE/CcsA family. May interact with ccs1.

It localises to the cellular thylakoid membrane. Required during biogenesis of c-type cytochromes (cytochrome c6 and cytochrome f) at the step of heme attachment. The polypeptide is Cytochrome c biogenesis protein CcsA (Nostoc sp. (strain PCC 7120 / SAG 25.82 / UTEX 2576)).